The following is a 291-amino-acid chain: 4-diphosphocytidyl-2-C-methyl-D-erythritol kinase (291 aa).

Lys-10 is an active-site residue. Residue 99–109 (PMGGGLGGGSS) participates in ATP binding. Residue Asp-141 is part of the active site.

This sequence belongs to the GHMP kinase family. IspE subfamily. As to quaternary structure, homodimer.

The enzyme catalyses 4-CDP-2-C-methyl-D-erythritol + ATP = 4-CDP-2-C-methyl-D-erythritol 2-phosphate + ADP + H(+). It functions in the pathway isoprenoid biosynthesis; isopentenyl diphosphate biosynthesis via DXP pathway; isopentenyl diphosphate from 1-deoxy-D-xylulose 5-phosphate: step 3/6. In terms of biological role, catalyzes the phosphorylation of the position 2 hydroxy group of 4-diphosphocytidyl-2C-methyl-D-erythritol. This chain is 4-diphosphocytidyl-2-C-methyl-D-erythritol kinase, found in Photorhabdus laumondii subsp. laumondii (strain DSM 15139 / CIP 105565 / TT01) (Photorhabdus luminescens subsp. laumondii).